Reading from the N-terminus, the 396-residue chain is L-lactate dehydrogenase (396 aa).

In terms of domain architecture, FMN hydroxy acid dehydrogenase spans 1-380 (MIISAASDYR…TQDSLVQGLG (380 aa)). Tyr24 lines the substrate pocket. Residues Ser106 and Gln127 each contribute to the FMN site. Tyr129 is a binding site for substrate. Thr155 is an FMN binding site. Arg164 serves as a coordination point for substrate. Position 251 (Lys251) interacts with FMN. The active-site Proton acceptor is His275. Arg278 contacts substrate. Position 306–330 (306–330 (DSGIRNGLDVVRMIALGADTVLLGR)) interacts with FMN.

Belongs to the FMN-dependent alpha-hydroxy acid dehydrogenase family. It depends on FMN as a cofactor.

It is found in the cell inner membrane. It catalyses the reaction (S)-lactate + A = pyruvate + AH2. Its function is as follows. Catalyzes the conversion of L-lactate to pyruvate. Is coupled to the respiratory chain. The polypeptide is L-lactate dehydrogenase (Shigella boydii serotype 4 (strain Sb227)).